Reading from the N-terminus, the 447-residue chain is Methyl-coenzyme M reductase II subunit beta (447 aa).

Y368 serves as a coordination point for coenzyme M. G370 contacts coenzyme B.

This sequence belongs to the methyl-coenzyme M reductase beta subunit family. MCR is a hexamer of two alpha, two beta, and two gamma chains, forming a dimer of heterotrimers. Coenzyme F430 serves as cofactor.

It carries out the reaction coenzyme B + methyl-coenzyme M = methane + coenzyme M-coenzyme B heterodisulfide. It functions in the pathway one-carbon metabolism; methyl-coenzyme M reduction; methane from methyl-coenzyme M: step 1/1. In terms of biological role, component of the methyl-coenzyme M reductase (MCR) I that catalyzes the reductive cleavage of methyl-coenzyme M (CoM-S-CH3 or 2-(methylthio)ethanesulfonate) using coenzyme B (CoB or 7-mercaptoheptanoylthreonine phosphate) as reductant which results in the production of methane and the mixed heterodisulfide of CoB and CoM (CoM-S-S-CoB). This is the final step in methanogenesis. The chain is Methyl-coenzyme M reductase II subunit beta (mrtB) from Methanocaldococcus jannaschii (strain ATCC 43067 / DSM 2661 / JAL-1 / JCM 10045 / NBRC 100440) (Methanococcus jannaschii).